The primary structure comprises 143 residues: Histone H2B.2, sperm (143 aa).

Positions Met-1 to Arg-49 are disordered. 5 short sequence motifs (SPKK motif) span residues Ser-4–Lys-7, Ser-9–Lys-12, Ser-14–Lys-17, Ser-19–Lys-22, and Ser-24–Arg-27. Positions Ser-9–Arg-49 are enriched in basic residues. 3 positions are modified to phosphoserine: Ser-14, Ser-19, and Ser-24. An O-linked (GlcNAc) serine glycan is attached at Ser-129. Residue Lys-137 forms a Glycyl lysine isopeptide (Lys-Gly) (interchain with G-Cter in ubiquitin) linkage.

The protein belongs to the histone H2B family. As to quaternary structure, the nucleosome is a histone octamer containing two molecules each of H2A, H2B, H3 and H4 assembled in one H3-H4 heterotetramer and two H2A-H2B heterodimers. The octamer wraps approximately 147 bp of DNA. In terms of processing, monoubiquitination of Lys-137 gives a specific tag for epigenetic transcriptional activation and is also prerequisite for histone H3 'Lys-4' and 'Lys-79' methylation. Phosphorylated on SPKK motifs 3, 4 and 5; which may regulate DNA binding. Dephosphorylated during maturation of spermatids to mature sperm and rephosphorylated at fertilization. Post-translationally, glcNAcylation at Ser-129 promotes monoubiquitination of Lys-137. It fluctuates in response to extracellular glucose, and associates with transcribed genes.

Its subcellular location is the nucleus. It localises to the chromosome. Functionally, core component of nucleosome. Nucleosomes wrap and compact DNA into chromatin, limiting DNA accessibility to the cellular machineries which require DNA as a template. Histones thereby play a central role in transcription regulation, DNA repair, DNA replication and chromosomal stability. DNA accessibility is regulated via a complex set of post-translational modifications of histones, also called histone code, and nucleosome remodeling. In Psammechinus miliaris (Green sea urchin), this protein is Histone H2B.2, sperm.